The following is a 267-amino-acid chain: Small ribosomal subunit protein uS2 (267 aa).

Residues 225–267 are disordered; it reads LREQELEGEEQEEAAPATEEEKKELIEEAVAEGEAEETEEEEK. A compositionally biased stretch (acidic residues) spans 251 to 267; sequence EEAVAEGEAEETEEEEK.

Belongs to the universal ribosomal protein uS2 family.

In Nitratiruptor sp. (strain SB155-2), this protein is Small ribosomal subunit protein uS2.